A 144-amino-acid chain; its full sequence is Snaclec coagulation factor IX/factor X-binding protein subunit B1 (144 aa).

The signal sequence occupies residues 1-23; the sequence is MGRFIFVSFGLLVVFLSLSGTAA. 3 cysteine pairs are disulfide-bonded: C25-C36, C53-C142, and C119-C134. One can recognise a C-type lectin domain in the interval 32–143; sequence YEGHCYKPFN…CRMMANFVCE (112 aa).

Belongs to the snaclec family. As to quaternary structure, heterodimer of subunits A and B1; disulfide-linked. Expressed by the venom gland.

It localises to the secreted. In terms of biological role, anticoagulant protein which binds to the gamma-carboxyglutamic acid-domain regions of factors IX (F9) and factor X (F10) in the presence of calcium with a 1 to 1 stoichiometry. The chain is Snaclec coagulation factor IX/factor X-binding protein subunit B1 from Trimeresurus stejnegeri (Chinese green tree viper).